Here is a 286-residue protein sequence, read N- to C-terminus: uncharacterized protein (286 aa).

Transmembrane regions (helical) follow at residues 52–74 (ILWT…LIGL), 79–101 (LIAI…FLFL), 142–161 (WWDP…VSFF), 168–190 (VLVF…GAIL), 203–225 (IQAT…VALV), and 257–276 (IIWI…ASFM).

Its subcellular location is the cell membrane. This is an uncharacterized protein from Archaeoglobus fulgidus (strain ATCC 49558 / DSM 4304 / JCM 9628 / NBRC 100126 / VC-16).